The chain runs to 156 residues: Succinate dehydrogenase assembly factor 2-B, mitochondrial (156 aa).

Residues Met-1 to Leu-24 constitute a mitochondrion transit peptide.

The protein belongs to the SDHAF2 family. In terms of assembly, interacts with the flavoprotein subunit within the SDH catalytic dimer.

Its subcellular location is the mitochondrion matrix. Its function is as follows. Plays an essential role in the assembly of succinate dehydrogenase (SDH), an enzyme complex (also referred to as respiratory complex II) that is a component of both the tricarboxylic acid (TCA) cycle and the mitochondrial electron transport chain, and which couples the oxidation of succinate to fumarate with the reduction of ubiquinone (coenzyme Q) to ubiquinol. Required for flavinylation (covalent attachment of FAD) of the flavoprotein subunit of the SDH catalytic dimer. This is Succinate dehydrogenase assembly factor 2-B, mitochondrial from Drosophila sechellia (Fruit fly).